Here is a 226-residue protein sequence, read N- to C-terminus: PKHD-type hydroxylase PLES_48951 (226 aa).

The region spanning Lys-78–Ser-178 is the Fe2OG dioxygenase domain. Residues His-96, Asp-98, and His-159 each coordinate Fe cation. Arg-169 serves as a coordination point for 2-oxoglutarate.

It depends on Fe(2+) as a cofactor. L-ascorbate is required as a cofactor.

The sequence is that of PKHD-type hydroxylase PLES_48951 from Pseudomonas aeruginosa (strain LESB58).